A 724-amino-acid chain; its full sequence is MEGERKNNNKRWYFTREQLENSPSRRFGVDSDKELSYRQQAANLLQDMGQRLNVSQLTINTAIVYMHRFYMIQSFTQFHRYSMAPAALFLAAKVEEQPKKLEHVIKVAHTCLHPQESLPDTRSEAYLQQVQDLVILESIILQTLGFELTIDHPHTHVVKCTQLVRASKDLAQTSYFMATNSLHLTTFSLQYTPPVVACVCIHLACKWSNWEIPVSTDGKHWWEYVDATVTLELLDELTHEFLQILEKTPSRLKRIRNWRAYQAAMKTKPDDRGADENTSEQTILNMISQTSSDTTIAGLMSMSTASTSAVPSLPSSEESSSSLTSVDMLQGERWLSSQPPFKLEAAQGHRTSESLALIGVDHSLQQDGSSAFGSQKQASKSVPSAKVSLKEYRAKHAEELAAQKRQLENMEANVKSQYAYAAQNLLSHDSHSSVILKMPIESSENPERPFLDKADKSALKMRLPVASGDKAVSSKPEEIKMRIKVHSAGDKHNSIEDSVTKSREHKEKQRTHPSNHHHHHNHHSHRHSHLQLPAGPVSKRPSDPKHSSQTSTLAHKTYSLSSTLSSSSSTRKRGPPEETGAAVFDHPAKIAKSTKSSLNFPFPPLPTMTQLPGHSSDTSGLPFSQPSCKTRVPHMKLDKGPPGANGHNATQSIDYQDTVNMLHSLLSAQGVQPTQAPAFEFVHSYGEYMNPRAGAISSRSGTTDKPRPPPLPSEPPPPLPPLPK.

Ser117 carries the phosphoserine modification. Residues 253–270 (KRIRNWRAYQAAMKTKPD) carry the Nuclear localization signal motif. Lys342 is covalently cross-linked (Glycyl lysine isopeptide (Lys-Gly) (interchain with G-Cter in SUMO2)). The stretch at 384-425 (SAKVSLKEYRAKHAEELAAQKRQLENMEANVKSQYAYAAQNL) forms a coiled coil. Position 388 is a phosphoserine (Ser388). Lys390 carries the post-translational modification N6-acetyllysine. A Glycyl lysine isopeptide (Lys-Gly) (interchain with G-Cter in SUMO2) cross-link involves residue Lys415. An ADP-ribosylserine mark is found at Ser416, Ser473, and Ser474. A histidine-rich domain (HRD) region spans residues 479-549 (IKMRIKVHSA…RPSDPKHSSQ (71 aa)). Lys480 is covalently cross-linked (Glycyl lysine isopeptide (Lys-Gly) (interchain with G-Cter in SUMO2)). Residues 483–507 (IKVHSAGDKHNSIEDSVTKSREHKE) show a composition bias toward basic and acidic residues. 2 disordered regions span residues 483 to 586 (IKVH…VFDH) and 691 to 724 (PRAG…PLPK). Lys484 is modified (N6-(ADP-ribosyl)lysine). His486 is subject to ADP-ribosylhistidine. Phosphoserine occurs at positions 494 and 498. The segment covering 508-529 (KQRTHPSNHHHHHNHHSHRHSH) has biased composition (basic residues). His529 is subject to ADP-ribosylhistidine. ADP-ribosylserine is present on residues Ser548 and Ser551. His555 carries the post-translational modification ADP-ribosylhistidine. Over residues 559-569 (SLSSTLSSSSS) the composition is skewed to low complexity. Ser562 bears the ADP-ribosylserine mark. Positions 708 to 724 (PPPLPSEPPPPLPPLPK) are enriched in pro residues.

The protein belongs to the cyclin family. Cyclin C subfamily. Cyclin-T1 is the predominant cyclin that associates with CDK9 to form a heterodimer called P-TEFb. P-TEFb forms a complex with AFF4/AF5Q31. Component of a complex which is at least composed of HTATSF1/Tat-SF1, P-TEFb complex, RNA pol II, SUPT5H, and NCL/nucleolin. Component of the 7SK snRNP complex at least composed of P-TEFb (composed of CDK9 and CCNT1/cyclin-T1), HEXIM1, HEXIM2, BCDIN3, SART3 proteins and 7SK and U6 snRNAs. Interacts (via central region) with ZMYND8 (via N-terminus); the interaction is direct and the association appears to occur between homodimeric ZMYND8 and the activated form of the P-TEFb complex. Interacts with BRD4, targets chromatin binding. Interacts with JMJD6. Interacts with MDFIC. Interacts with HSF1. Interacts with HTATSF1. Interacts with TBX21. ADP-ribosylation on serine residues by PARP1 in response to DNA damage disrupts the phase separation activity of CCNT1, thereby preventing activation of CDK9.

It is found in the nucleus. Its function is as follows. Regulatory subunit of the cyclin-dependent kinase pair (CDK9/cyclin-T1) complex, also called positive transcription elongation factor B (P-TEFb), which facilitates the transition from abortive to productive elongation by phosphorylating the CTD (C-terminal domain) of the large subunit of RNA polymerase II (RNA Pol II). Required to activate the protein kinase activity of CDK9: acts by mediating formation of liquid-liquid phase separation (LLPS) that enhances binding of P-TEFb to the CTD of RNA Pol II. The protein is Cyclin-T1 (Ccnt1) of Mus musculus (Mouse).